The sequence spans 459 residues: Cysteine--tRNA ligase (459 aa).

Residue Cys-28 coordinates Zn(2+). Residues 30–40 carry the 'HIGH' region motif; sequence ITVYDLCHVGH. Positions 209, 234, and 238 each coordinate Zn(2+). A 'KMSKS' region motif is present at residues 266-270; sequence KMSKS. Position 269 (Lys-269) interacts with ATP.

It belongs to the class-I aminoacyl-tRNA synthetase family. As to quaternary structure, monomer. Requires Zn(2+) as cofactor.

Its subcellular location is the cytoplasm. The enzyme catalyses tRNA(Cys) + L-cysteine + ATP = L-cysteinyl-tRNA(Cys) + AMP + diphosphate. The sequence is that of Cysteine--tRNA ligase (cysS) from Pasteurella multocida (strain Pm70).